A 341-amino-acid chain; its full sequence is uncharacterized protein (341 aa).

This is an uncharacterized protein from Methanocaldococcus jannaschii (strain ATCC 43067 / DSM 2661 / JAL-1 / JCM 10045 / NBRC 100440) (Methanococcus jannaschii).